Here is a 130-residue protein sequence, read N- to C-terminus: Small ribosomal subunit protein uS8 (130 aa).

Belongs to the universal ribosomal protein uS8 family. Part of the 30S ribosomal subunit. Contacts proteins S5 and S12.

Functionally, one of the primary rRNA binding proteins, it binds directly to 16S rRNA central domain where it helps coordinate assembly of the platform of the 30S subunit. The protein is Small ribosomal subunit protein uS8 of Pseudoalteromonas translucida (strain TAC 125).